A 103-amino-acid polypeptide reads, in one-letter code: Cell division suppressor protein YneA (103 aa).

Positions 36 to 87 constitute a LysM domain; sequence VKIEVQEGDTLWELADRIKGGKTADKHKFIEWVADKNNLPTSVIKPGDVLIL.

The protein belongs to the YneA family.

It localises to the cytoplasm. Functionally, inhibits cell division during the SOS response. Affects a later stage of the cell division protein assembly, after the assembly of the Z ring, by probably suppressing recruitment of FtsL and/or DivIC to the division machinery. In Bacillus licheniformis (strain ATCC 14580 / DSM 13 / JCM 2505 / CCUG 7422 / NBRC 12200 / NCIMB 9375 / NCTC 10341 / NRRL NRS-1264 / Gibson 46), this protein is Cell division suppressor protein YneA.